The following is a 327-amino-acid chain: uncharacterized protein (327 aa).

At 1 to 19 (MSIAQDRGIVFKLLSIYRA) the chain is on the cytoplasmic side. The chain crosses the membrane as a helical span at residues 20–40 (AAGIFMALAQLIVIFFGYCDF). Residues 41 to 51 (KIKGYRIASYN) lie on the Extracellular side of the membrane. A helical membrane pass occupies residues 52-72 (APTFASSFIILAVCLLLVVVL). Residues 73–104 (ENPEVKVTNSENSLFSALKQFFRVERKKLISC) lie on the Cytoplasmic side of the membrane. A helical membrane pass occupies residues 105–125 (LILLWSMFLSSFIMSEVVYFM). The Extracellular portion of the chain corresponds to 126–141 (PLFLTLHVNWDTKFQG). A helical transmembrane segment spans residues 142-162 (IAFMVASILGVTGSYFAPKLI). Topologically, residues 163 to 199 (NVGCSCGRAKDGGLEESDTTGSETVEVKKKDSLYSGQ) are cytoplasmic. Residues 200–220 (VFLSIFALFVSLLGQAFMIGA) form a helical membrane-spanning segment. Residues 221–235 (SEALKHKSMPPTNSG) are Extracellular-facing. A helical transmembrane segment spans residues 236–256 (IFFSAGMSITLLGYNFLASSI). Topologically, residues 257-275 (PALFSMYIDPKLKVQLMPS) are cytoplasmic. A helical transmembrane segment spans residues 276-296 (IGAISGIGKLVAPIVLAALYG). The Extracellular portion of the chain corresponds to 297–300 (TRLG). The helical transmembrane segment at 301–321 (LSIAVGFGMILVAVSIPPLIW) threads the bilayer. The Cytoplasmic portion of the chain corresponds to 322-327 (LRKKRC).

It is found in the membrane. This is an uncharacterized protein from Saccharomyces cerevisiae (strain ATCC 204508 / S288c) (Baker's yeast).